A 373-amino-acid chain; its full sequence is Probable G-protein coupled receptor 173 (373 aa).

Topologically, residues 1 to 26 (MANTTGEPEEVSGALSPPSASAYVKL) are extracellular. Residue N3 is glycosylated (N-linked (GlcNAc...) asparagine). A helical membrane pass occupies residues 27–47 (VLLGLIMCVSLAGNAILSLLV). At 48–59 (LKERALHKAPYY) the chain is on the cytoplasmic side. A helical transmembrane segment spans residues 60–80 (FLLDLCLADGIRSAVCFPFVL). The Extracellular segment spans residues 81-97 (ASVRHGSSWTFSALSCK). A disulfide bridge links C96 with C174. The chain crosses the membrane as a helical span at residues 98-118 (IVAFMAVLFCFHAAFMLFCIS). The Cytoplasmic segment spans residues 119–139 (VTRYMAIAHHRFYAKRMTLWT). The helical transmembrane segment at 140 to 160 (CAAVICMAWTLSVAMAFPPVF) threads the bilayer. The Extracellular portion of the chain corresponds to 161-188 (DVGTYKFIREEDQCIFEHRYFKANDTLG). N184 is a glycosylation site (N-linked (GlcNAc...) asparagine). A helical transmembrane segment spans residues 189–209 (FMLMLAVLMAATHAVYGKLLL). Over 210–287 (FEYRHRKMKP…VKGEKQLGRM (78 aa)) the chain is Cytoplasmic. The chain crosses the membrane as a helical span at residues 288–308 (FYAITLLFLLLWSPYIVACYW). Over 309–322 (RVFVKACAVPHRYL) the chain is Extracellular. The helical transmembrane segment at 323-343 (ATAVWMSFAQAAVNPIVCFLL) threads the bilayer. Over 344–373 (NKDLKKCLRTHAPCWGTGGAPAPREPYCVM) the chain is Cytoplasmic.

Belongs to the G-protein coupled receptor 1 family. As to expression, expressed in the ovary, specifically in granulosa cells of follicles that have passed the primary stage and in oocytes (at protein level). Expressed at high levels in brain. Lower levels in small intestine. In brain regions, detected in all regions tested. Highest levels in the cerebellum and cerebral cortex.

The protein resides in the cell membrane. In terms of biological role, is a receptor for the SMIM20 derived peptides Phoenixin-14 and Phoenixin-20. It mediates the Phoenixin-14 and Phoenixin-20 augmentation of gonadotropin-releasing hormone (GNRH) signaling in the hypothalamus and pituitary gland. In the ovary, it mediates the effects of Phoenixin-14 and Phoenixin-20 induced granulosa cell proliferation during follicular growth. The protein is Probable G-protein coupled receptor 173 (GPR173) of Homo sapiens (Human).